Reading from the N-terminus, the 418-residue chain is NADH-quinone oxidoreductase subunit D (418 aa).

The protein belongs to the complex I 49 kDa subunit family. As to quaternary structure, NDH-1 is composed of 14 different subunits. Subunits NuoB, C, D, E, F, and G constitute the peripheral sector of the complex.

The protein resides in the cell inner membrane. The enzyme catalyses a quinone + NADH + 5 H(+)(in) = a quinol + NAD(+) + 4 H(+)(out). NDH-1 shuttles electrons from NADH, via FMN and iron-sulfur (Fe-S) centers, to quinones in the respiratory chain. The immediate electron acceptor for the enzyme in this species is believed to be ubiquinone. Couples the redox reaction to proton translocation (for every two electrons transferred, four hydrogen ions are translocated across the cytoplasmic membrane), and thus conserves the redox energy in a proton gradient. In Bordetella avium (strain 197N), this protein is NADH-quinone oxidoreductase subunit D.